Consider the following 207-residue polypeptide: Large ribosomal subunit protein bL25 (207 aa).

The tract at residues 171–207 (EEETVVTVSAPRAEEEPTTTEAPEPEAVHGNDEEPVE) is disordered. Basic and acidic residues predominate over residues 196-207 (EAVHGNDEEPVE).

This sequence belongs to the bacterial ribosomal protein bL25 family. CTC subfamily. As to quaternary structure, part of the 50S ribosomal subunit; part of the 5S rRNA/L5/L18/L25 subcomplex. Contacts the 5S rRNA. Binds to the 5S rRNA independently of L5 and L18.

This is one of the proteins that binds to the 5S RNA in the ribosome where it forms part of the central protuberance. This is Large ribosomal subunit protein bL25 from Listeria innocua serovar 6a (strain ATCC BAA-680 / CLIP 11262).